The primary structure comprises 834 residues: Glycerol-3-phosphate acyltransferase (834 aa).

The short motif at 309–314 (CHRSHI) is the HXXXXD motif element.

Belongs to the GPAT/DAPAT family.

Its subcellular location is the cell inner membrane. The enzyme catalyses sn-glycerol 3-phosphate + an acyl-CoA = a 1-acyl-sn-glycero-3-phosphate + CoA. Its pathway is phospholipid metabolism; CDP-diacylglycerol biosynthesis; CDP-diacylglycerol from sn-glycerol 3-phosphate: step 1/3. This Pseudomonas fluorescens (strain Pf0-1) protein is Glycerol-3-phosphate acyltransferase.